Consider the following 1227-residue polypeptide: JNK-interacting protein 3 (1227 aa).

The tract at residues 1 to 22 is disordered; the sequence is MMDNDDALLNNGGPQSGAETVY. Positions 25 to 113 constitute an RH1 domain; the sequence is EDNNMVMSEK…VTQYEREKSA (89 aa). Positions 84–191 form a coiled coil; it reads RINQEQDVEV…TELFKNHVDY (108 aa). Residues 281-323 are disordered; the sequence is DALQQQHHATSPQSPDSSPVVPNVPTNVGRSTTKKEQRSDNNL. A compositionally biased stretch (low complexity) spans 290 to 308; the sequence is TSPQSPDSSPVVPNVPTNV. A coiled-coil region spans residues 363 to 489; it reads GKEVENLIME…EAVRLTEILR (127 aa). An RH2 domain is found at 453–524; the sequence is RKRFTRVEMA…PSNRPTERVA (72 aa). Disordered regions lie at residues 517-572, 804-851, and 863-889; these read NRPT…HPAS, GKVE…AEEP, and PLPGAPQRLSTDGNQTNNNNNSSSSSN. Gly residues predominate over residues 526–540; the sequence is GLGGGPMFRHTGGGS. Positions 541-550 are enriched in low complexity; the sequence is PAHSHGSPSR. Basic and acidic residues predominate over residues 807-817; it reads EFVRVKPKSDD. Residues 814 to 849 are a coiled coil; sequence KSDDEQNSNEKQQQEEEEAKEATEKSNEQLPAVSAE. Low complexity predominate over residues 879-889; sequence NNNNNSSSSSN.

This sequence belongs to the JIP scaffold family. In terms of assembly, forms homo- and heterooligomeric complexes. Binds the TPR motif-containing C-terminal of kinesin light chain, Klc. Pre-assembled syd scaffolding complexes are then transported as a cargo of kinesin, to the required subcellular location.

The protein localises to the cytoplasm. In terms of biological role, the JNK-interacting protein (JIP) group of scaffold proteins selectively mediates JNK-signaling by aggregating specific components of the MAPK cascade to form a functional JNK signaling module. May function as a regulator of vesicle transport, through interactions with the JNK-signaling components and motor proteins. Syd is required for efficient kinesin-I mediated axonal transport. The chain is JNK-interacting protein 3 (syd) from Drosophila melanogaster (Fruit fly).